Reading from the N-terminus, the 352-residue chain is GTPase Obg (352 aa).

The 159-residue stretch at M1–L159 folds into the Obg domain. Residues S160–D327 form the OBG-type G domain. GTP contacts are provided by residues G166–S173, F191–E195, D212–G215, N279–D282, and S308–D310. Mg(2+) is bound by residues S173 and T193.

The protein belongs to the TRAFAC class OBG-HflX-like GTPase superfamily. OBG GTPase family. As to quaternary structure, monomer. The cofactor is Mg(2+).

It is found in the cytoplasm. An essential GTPase which binds GTP, GDP and possibly (p)ppGpp with moderate affinity, with high nucleotide exchange rates and a fairly low GTP hydrolysis rate. Plays a role in control of the cell cycle, stress response, ribosome biogenesis and in those bacteria that undergo differentiation, in morphogenesis control. This Anaplasma phagocytophilum (strain HZ) protein is GTPase Obg.